Reading from the N-terminus, the 162-residue chain is NADH-quinone oxidoreductase subunit I (162 aa).

2 4Fe-4S ferredoxin-type domains span residues 52 to 82 (LRRY…IEAG) and 93 to 122 (TRYD…EGPN). The [4Fe-4S] cluster site is built by Cys62, Cys65, Cys68, Cys72, Cys102, Cys105, Cys108, and Cys112.

It belongs to the complex I 23 kDa subunit family. As to quaternary structure, NDH-1 is composed of 14 different subunits. Subunits NuoA, H, J, K, L, M, N constitute the membrane sector of the complex. [4Fe-4S] cluster serves as cofactor.

The protein localises to the cell inner membrane. It carries out the reaction a quinone + NADH + 5 H(+)(in) = a quinol + NAD(+) + 4 H(+)(out). NDH-1 shuttles electrons from NADH, via FMN and iron-sulfur (Fe-S) centers, to quinones in the respiratory chain. The immediate electron acceptor for the enzyme in this species is believed to be ubiquinone. Couples the redox reaction to proton translocation (for every two electrons transferred, four hydrogen ions are translocated across the cytoplasmic membrane), and thus conserves the redox energy in a proton gradient. The sequence is that of NADH-quinone oxidoreductase subunit I from Methylobacterium radiotolerans (strain ATCC 27329 / DSM 1819 / JCM 2831 / NBRC 15690 / NCIMB 10815 / 0-1).